The sequence spans 391 residues: Processive diacylglycerol beta-glucosyltransferase (391 aa).

Belongs to the glycosyltransferase 28 family. UgtP subfamily.

Its subcellular location is the cell membrane. It catalyses the reaction a 1,2-diacyl-3-O-(beta-D-glucopyranosyl)-sn-glycerol + UDP-alpha-D-glucose = a 1,2-diacyl-3-O-(beta-D-Glc-(1-&gt;6)-beta-D-Glc)-sn-glycerol + UDP + H(+). The catalysed reaction is a 1,2-diacyl-sn-glycerol + UDP-alpha-D-glucose = a 1,2-diacyl-3-O-(beta-D-glucopyranosyl)-sn-glycerol + UDP + H(+). The protein operates within glycolipid metabolism; diglucosyl-diacylglycerol biosynthesis. In terms of biological role, processive glucosyltransferase involved in the biosynthesis of both the bilayer- and non-bilayer-forming membrane glucolipids. Is able to successively transfer two glucosyl residues to diacylglycerol (DAG), thereby catalyzing the formation of beta-monoglucosyl-DAG (3-O-(beta-D-glucopyranosyl)-1,2-diacyl-sn-glycerol) and beta-diglucosyl-DAG (3-O-(beta-D-glucopyranosyl-beta-(1-&gt;6)-D-glucopyranosyl)-1,2-diacyl-sn-glycerol). Beta-diglucosyl-DAG is the predominant glycolipid found in Bacillales and is also used as a membrane anchor for lipoteichoic acid (LTA). The chain is Processive diacylglycerol beta-glucosyltransferase from Staphylococcus carnosus (strain TM300).